The sequence spans 229 residues: MSSLKKILGLKGKGKKSKKLGIAPPPYEEDTSMEYAPSAPIDKSYFGVDEMDTHDPNQLRYEKFFFTVKMTVRSNRPFRTYSDVAAAVSHWDHMYIGMAGKRPFYKILAFLGSSNLKATPAVLADRGQPEYHAHCEGRAYLPHRMGKTPPMLNVPEHFRRPFNIGLYKGTVELTMTIYDDESLEAAPMIWDHFNSSKFSDFREKALMFGLIVEKKASGAWVLDSVSHFK.

The segment covering 1-10 (MSSLKKILGL) has biased composition (low complexity). The disordered stretch occupies residues 1–23 (MSSLKKILGLKGKGKKSKKLGIA). The dynamin binding motif lies at 2–4 (SSL). The short motif at 24-27 (PPPY) is the PPXY motif element. Residues 37–40 (PSAP) carry the PTAP/PSAP motif motif.

It belongs to the vesiculoviruses matrix protein family. Homomultimer. Interacts with viral nucleocapsid; this interaction contributes to the virion assembly. Interacts with the viral envelope glycoprotein; this interaction contributes to the virion assembly. Interacts with host RAE1-NUP98 complex. Interacts with host NEDD4 and TSG101. Interacts with host dynamin. Interacts with host NDUFAF4; the interaction inhibits viral propagation and is independent of interferon activation. Interacts with host GTF2H5; the interaction may inhibit host transcription. Post-translationally, phosphorylated by host.

The protein localises to the virion. It is found in the host endomembrane system. It localises to the host nucleus membrane. Its subcellular location is the host nucleus. The protein resides in the host cytoplasm. Its function is as follows. Forms a double layer around the helical nucleocapsid, the inner matrix layer binding to the N helix and the outer matrix layer binding to the envelope glycoprotein. Plays a major role in assembly and budding of virion, by recruiting cellular partners of the ESCRT complexes that play a key role in releasing the budding particle from the host membrane. Condensates the ribonucleocapsid core during virus assembly. Inhibits the host mRNA nuclear export thereby inducing the shut off of cellular transcription and preventing the interferon signaling and the establishment of antiviral state in infected cells. This shutoff presumably inhibits interferon signaling and thus establishment of antiviral state in virus infected cells. Induces cell-rounding, cytoskeleton disorganization and apoptosis in infected cell. Inhibits host transcription, possibly through interaction with host DNA repair factor IIH/TFIIH GTF2H5 subunit. This Aedes (Bovine) protein is Matrix protein (M).